A 185-amino-acid polypeptide reads, in one-letter code: Ribosome-recycling factor (185 aa).

This sequence belongs to the RRF family.

It localises to the cytoplasm. Its function is as follows. Responsible for the release of ribosomes from messenger RNA at the termination of protein biosynthesis. May increase the efficiency of translation by recycling ribosomes from one round of translation to another. In Alkalilimnicola ehrlichii (strain ATCC BAA-1101 / DSM 17681 / MLHE-1), this protein is Ribosome-recycling factor.